The following is a 155-amino-acid chain: Putative pre-16S rRNA nuclease (155 aa).

The protein belongs to the YqgF nuclease family.

The protein resides in the cytoplasm. Its function is as follows. Could be a nuclease involved in processing of the 5'-end of pre-16S rRNA. The chain is Putative pre-16S rRNA nuclease from Paramagnetospirillum magneticum (strain ATCC 700264 / AMB-1) (Magnetospirillum magneticum).